A 998-amino-acid polypeptide reads, in one-letter code: Protein Smaug (998 aa).

Residues 1-37 (MKYATGTDNAMTSGISGQTNSSNSASNEMQPTTSTPT) are compositionally biased toward polar residues. Disordered regions lie at residues 1 to 45 (MKYA…EATS), 50 to 69 (TATY…QSQP), and 329 to 370 (LCPA…GSSS). Positions 329–338 (LCPASGSRSS) are enriched in low complexity. Residues Ser564 and Ser575 each carry the phosphoserine modification. An interaction with cup region spans residues 583–763 (EFKPNYIKFH…KDLKFKLSKM (181 aa)). Residues 600–654 (GIGLWLKSLRLHKYIELFKNMTYEEMLLITEDFLQSVGVTKGASHKLALCIDKLK) form the SAM domain. Disordered regions lie at residues 773–892 (HVKP…MQQM) and 943–977 (NGSN…QQPK). 2 stretches are compositionally biased toward polar residues: residues 801-822 (KSGS…NFSL) and 854-864 (HQPQYKSSSYP). Residue Ser971 is modified to Phosphoserine.

This sequence belongs to the SMAUG family. In terms of assembly, interacts with oskar (osk). Binds to the 3'-UTR of nos. Interacts with cup, which in turn recruits eIF4-E, leading to an indirect interaction between smg and eIF4-E that prevents mRNA translation.

It is found in the cytoplasm. Functionally, translation regulator that binds to the 3'-UTR of specific mRNAs such as nanos (nos) and prevent their translation. Prevents translation of unlocalized nos in the bulk cytoplasm via the recruitment of cup. This Drosophila sechellia (Fruit fly) protein is Protein Smaug.